The chain runs to 168 residues: Crossover junction endodeoxyribonuclease RuvC (168 aa).

Residues Asp7, Glu66, and Asp138 contribute to the active site. Residues Asp7, Glu66, and Asp138 each contribute to the Mg(2+) site.

It belongs to the RuvC family. As to quaternary structure, homodimer which binds Holliday junction (HJ) DNA. The HJ becomes 2-fold symmetrical on binding to RuvC with unstacked arms; it has a different conformation from HJ DNA in complex with RuvA. In the full resolvosome a probable DNA-RuvA(4)-RuvB(12)-RuvC(2) complex forms which resolves the HJ. It depends on Mg(2+) as a cofactor.

The protein resides in the cytoplasm. The enzyme catalyses Endonucleolytic cleavage at a junction such as a reciprocal single-stranded crossover between two homologous DNA duplexes (Holliday junction).. Its function is as follows. The RuvA-RuvB-RuvC complex processes Holliday junction (HJ) DNA during genetic recombination and DNA repair. Endonuclease that resolves HJ intermediates. Cleaves cruciform DNA by making single-stranded nicks across the HJ at symmetrical positions within the homologous arms, yielding a 5'-phosphate and a 3'-hydroxyl group; requires a central core of homology in the junction. The consensus cleavage sequence is 5'-(A/T)TT(C/G)-3'. Cleavage occurs on the 3'-side of the TT dinucleotide at the point of strand exchange. HJ branch migration catalyzed by RuvA-RuvB allows RuvC to scan DNA until it finds its consensus sequence, where it cleaves and resolves the cruciform DNA. This Cereibacter sphaeroides (strain ATCC 17023 / DSM 158 / JCM 6121 / CCUG 31486 / LMG 2827 / NBRC 12203 / NCIMB 8253 / ATH 2.4.1.) (Rhodobacter sphaeroides) protein is Crossover junction endodeoxyribonuclease RuvC.